The chain runs to 556 residues: Formate--tetrahydrofolate ligase 2 (556 aa).

An ATP-binding site is contributed by 65–72 (TPAGEGKS).

Belongs to the formate--tetrahydrofolate ligase family.

It catalyses the reaction (6S)-5,6,7,8-tetrahydrofolate + formate + ATP = (6R)-10-formyltetrahydrofolate + ADP + phosphate. It participates in one-carbon metabolism; tetrahydrofolate interconversion. This is Formate--tetrahydrofolate ligase 2 from Streptococcus sanguinis (strain SK36).